Consider the following 405-residue polypeptide: Coiled-coil domain-containing protein 91 (405 aa).

The tract at residues 1-16 (MDDDDFGGFEAAETFD) is GGA1-binding motif. The tract at residues 1-27 (MDDDDFGGFEAAETFDGGNGETQTTSP) is disordered. Phosphoserine occurs at positions 43 and 46. The stretch at 126–376 (GANVSNIQLR…QKRLDQVIRQ (251 aa)) forms a coiled coil. A homodimerization region spans residues 210–377 (LSIIVDEYKH…KRLDQVIRQR (168 aa)).

As to quaternary structure, homodimer. Interacts with GGA1, GGA2 and AP1G1.

The protein localises to the membrane. It is found in the golgi apparatus. The protein resides in the trans-Golgi network membrane. It localises to the trans-Golgi network. Functionally, involved in the regulation of membrane traffic through the trans-Golgi network (TGN). Functions in close cooperation with the GGAs in the sorting of hydrolases to lysosomes. The chain is Coiled-coil domain-containing protein 91 (CCDC91) from Pongo abelii (Sumatran orangutan).